We begin with the raw amino-acid sequence, 121 residues long: Large ribosomal subunit protein bL12 (121 aa).

It belongs to the bacterial ribosomal protein bL12 family. As to quaternary structure, homodimer. Part of the ribosomal stalk of the 50S ribosomal subunit. Forms a multimeric L10(L12)X complex, where L10 forms an elongated spine to which 2 to 4 L12 dimers bind in a sequential fashion. Binds GTP-bound translation factors.

Its function is as follows. Forms part of the ribosomal stalk which helps the ribosome interact with GTP-bound translation factors. Is thus essential for accurate translation. In Psychromonas ingrahamii (strain DSM 17664 / CCUG 51855 / 37), this protein is Large ribosomal subunit protein bL12.